We begin with the raw amino-acid sequence, 219 residues long: Thiopurine S-methyltransferase (219 aa).

The S-adenosyl-L-methionine site is built by Trp-10, Leu-45, Glu-66, and Arg-130.

Belongs to the class I-like SAM-binding methyltransferase superfamily. TPMT family.

It localises to the cytoplasm. The catalysed reaction is S-adenosyl-L-methionine + a thiopurine = S-adenosyl-L-homocysteine + a thiopurine S-methylether.. The protein is Thiopurine S-methyltransferase of Psychrobacter cryohalolentis (strain ATCC BAA-1226 / DSM 17306 / VKM B-2378 / K5).